Here is a 56-residue protein sequence, read N- to C-terminus: Photosystem II assembly protein Psb34 (56 aa).

The Cytoplasmic segment spans residues 1 to 33; the sequence is MRYTTDEGGRLNNFAIEPKVYQAQPWTPQQKVR. A helical transmembrane segment spans residues 34 to 54; it reads AALLVGGGLLLVAGLVAIAVG. Residues 55-56 lie on the Extracellular side of the membrane; it reads VS.

As to quaternary structure, part of photosystem II (PSII) assembly intermediate complex PSII-I; crystallized from a strain without psbJ, it forms monomeric PSII before addition of the oxygen evolving complex. PSII-I includes 3 assembly factors not found in mature PSII (Psb27, Psb28 and Psb34). The N-terminus of Psb34 (this protein) binds to CP47 (psbB) in close proximity to PsbH on the cytoplasmic face of PSII.

The protein resides in the cellular thylakoid membrane. In terms of biological role, involved in photosystem II (PSII) assembly and/or repair, probably in conversion of late PSII assembly intermediates into mature dimeric PSII. The polypeptide is Photosystem II assembly protein Psb34 (Thermosynechococcus vestitus (strain NIES-2133 / IAM M-273 / BP-1)).